The chain runs to 146 residues: Single-stranded DNA-binding protein 1-A, mitochondrial (146 aa).

A mitochondrion-targeting transit peptide spans 1 to 17 (MFHRPALQVFRQFARCQ). One can recognise an SSB domain in the interval 28-140 (INKVQLLGRV…IIADNIIFLS (113 aa)).

In terms of assembly, homotetramer.

It localises to the mitochondrion. Its subcellular location is the mitochondrion matrix. The protein localises to the mitochondrion nucleoid. In terms of biological role, binds preferentially and cooperatively to pyrimidine rich single-stranded DNA (ss-DNA). Required to maintain the copy number of mitochondrial DNA (mtDNA) and plays crucial roles during mtDNA replication that stimulate activity of the DNA polymerase at the replication fork. May also function in mtDNA repair. The sequence is that of Single-stranded DNA-binding protein 1-A, mitochondrial (ssbp1-a) from Xenopus laevis (African clawed frog).